Here is a 31-residue protein sequence, read N- to C-terminus: LysM-domain containing protein (31 aa).

The stretch at 1-28 is one LysM 1 repeat; sequence YSPSLTDLQSYNAMNGPALKAGDILAVP.

This chain is LysM-domain containing protein, found in Jatropha curcas (Barbados nut).